We begin with the raw amino-acid sequence, 62 residues long: Small ribosomal subunit protein eS27 (62 aa).

4 residues coordinate Zn(2+): C17, C20, C36, and C39. The C4-type zinc finger occupies 17 to 39 (CNDCENEQIIFGSASRKITCVVC).

Belongs to the eukaryotic ribosomal protein eS27 family. In terms of assembly, part of the 30S ribosomal subunit. Zn(2+) serves as cofactor.

This is Small ribosomal subunit protein eS27 from Methanosarcina mazei (strain ATCC BAA-159 / DSM 3647 / Goe1 / Go1 / JCM 11833 / OCM 88) (Methanosarcina frisia).